The chain runs to 1922 residues: Endoribonuclease Dicer (1922 aa).

Positions 51–227 (LLEAALDHNT…ELEEKIQKLE (177 aa)) constitute a Helicase ATP-binding domain. 64–71 (LNTGSGKT) contributes to the ATP binding site. A DECH box motif is present at residues 175–178 (DECH). A required for interaction with PRKRA and TARBP2 region spans residues 256-595 (DCGPFTDRSG…LRNKCSKSVD (340 aa)). The disordered stretch occupies residues 409 to 433 (YVSWSDSEDDDEDEEIEEKEKPETN). 2 positions are modified to phosphoserine: Ser413 and Ser415. Positions 414-425 (DSEDDDEDEEIE) are enriched in acidic residues. One can recognise a Helicase C-terminal domain in the interval 433–602 (NFPSPFTNIL…SVDTGETDID (170 aa)). In terms of domain architecture, Dicer dsRNA-binding fold spans 630–722 (AIGHINRYCA…MPVGKETVKY (93 aa)). The PAZ domain occupies 895–1042 (KFMEDIEKSE…LVPELCAIHP (148 aa)). Ser1016 and Ser1160 each carry phosphoserine. An RNase III 1 domain is found at 1276-1403 (DSEQSPSIGY…TDKWEKDEMT (128 aa)). Residues Glu1316, Asp1395, and Glu1398 each contribute to the Mg(2+) site. Ser1460, Ser1468, and Ser1470 each carry phosphoserine. An RNase III 2 domain is found at 1666-1824 (FENFEKKINY…LAGAIYMDSG (159 aa)). Mg(2+)-binding residues include Glu1705, Asp1810, and Glu1813. The DRBM domain maps to 1849–1914 (VPRSPVRELL…ARRALRSLKA (66 aa)). Ser1868 carries the post-translational modification Phosphoserine.

The protein belongs to the helicase family. Dicer subfamily. Component of the RISC loading complex (RLC), or micro-RNA (miRNA) loading complex (miRLC), which is composed of DICER1, AGO2 and TARBP2; DICER1 and TARBP2 are required to process precursor miRNAs (pre-miRNAs) to mature miRNAs and then load them onto AGO2. Note that the trimeric RLC/miRLC is also referred to as RISC. Interacts with DHX9, AGO1, PIWIL1 and PRKRA. Associates with the 60S ribosome. Interacts with BCDIN3D. Interacts with AGO2, TARBP2, EIF6, MOV10 and RPL7A (60S ribosome subunit); they form a large RNA-induced silencing complex (RISC). Interacts (via Dicer dsRNA-binding fold domain) with ALOX5 (via PLAT domain); this interaction enhances arachidonate 5-lipoxygenase activity and modifies the miRNA precursor processing activity of DICER1. As to quaternary structure, (Microbial infection) Interacts with ebolavirus transcriptional activator VP30; this interaction prevents TARBP2/TRBP binding to DICER1 and thus allows the virus to counteract host RNA silencing. In terms of assembly, (Microbial infection) Interacts with ebolavirus transcriptional activator VP35; this interaction prevents TARBP2/TRBP binding to DICER1 and thus allows the virus to counteract host RNA silencing. The cofactor is Mg(2+). Mn(2+) serves as cofactor.

It localises to the cytoplasm. It is found in the perinuclear region. It catalyses the reaction Endonucleolytic cleavage to 5'-phosphomonoester.. Its function is as follows. Double-stranded RNA (dsRNA) endoribonuclease playing a central role in short dsRNA-mediated post-transcriptional gene silencing. Cleaves naturally occurring long dsRNAs and short hairpin pre-microRNAs (miRNA) into fragments of twenty-one to twenty-three nucleotides with 3' overhang of two nucleotides, producing respectively short interfering RNAs (siRNA) and mature microRNAs. SiRNAs and miRNAs serve as guide to direct the RNA-induced silencing complex (RISC) to complementary RNAs to degrade them or prevent their translation. Gene silencing mediated by siRNAs, also called RNA interference, controls the elimination of transcripts from mobile and repetitive DNA elements of the genome but also the degradation of exogenous RNA of viral origin for instance. The miRNA pathway on the other side is a mean to specifically regulate the expression of target genes. The sequence is that of Endoribonuclease Dicer (DICER1) from Homo sapiens (Human).